The primary structure comprises 205 residues: Outer-membrane lipoprotein LolB (205 aa).

A signal peptide spans 1 to 17 (MRLRLFLAASALALLSG). Residue Cys18 is the site of N-palmitoyl cysteine attachment. Cys18 carries the S-diacylglycerol cysteine lipid modification.

Belongs to the LolB family. As to quaternary structure, monomer.

It is found in the cell outer membrane. Plays a critical role in the incorporation of lipoproteins in the outer membrane after they are released by the LolA protein. The protein is Outer-membrane lipoprotein LolB of Pseudomonas paraeruginosa (strain DSM 24068 / PA7) (Pseudomonas aeruginosa (strain PA7)).